The sequence spans 244 residues: DNA repair protein RecO (244 aa).

The protein belongs to the RecO family.

Involved in DNA repair and RecF pathway recombination. In Caldicellulosiruptor saccharolyticus (strain ATCC 43494 / DSM 8903 / Tp8T 6331), this protein is DNA repair protein RecO.